The following is a 626-amino-acid chain: Serine/threonine-protein kinase PknH (626 aa).

Residues 1–403 (MSDAQDSRVG…QTPRKTNPWP (403 aa)) are Cytoplasmic-facing. In terms of domain architecture, Protein kinase spans 16–276 (YHLKRLLGRG…DLALAAHEAL (261 aa)). Residues 22–30 (LGRGGMGEV) and Lys-45 each bind ATP. Catalysis depends on Asp-139, which acts as the Proton acceptor. Thr-170 is modified (phosphothreonine). The segment at 292 to 396 (QESTLPAPPK…GGPSPWAQTP (105 aa)) is disordered. Pro residues-rich tracts occupy residues 297–308 (PAPPKPVPPPTM) and 316–342 (RQPP…PAQP). Low complexity predominate over residues 343 to 355 (GPAGQRPGPTGQP). A helical membrane pass occupies residues 404-424 (LVAGAAAVVLVLVLGAIGIWI). The Extracellular portion of the chain corresponds to 425 to 626 (AIRPKPVQPP…AKIVDKVNKE (202 aa)). Intrachain disulfides connect Cys-482/Cys-545 and Cys-587/Cys-604.

It belongs to the protein kinase superfamily. Ser/Thr protein kinase family. A divalent metal cation serves as cofactor. Autophosphorylated on threonine and serine residues. Dephosphorylated by PstP.

It localises to the cell membrane. It carries out the reaction L-seryl-[protein] + ATP = O-phospho-L-seryl-[protein] + ADP + H(+). It catalyses the reaction L-threonyl-[protein] + ATP = O-phospho-L-threonyl-[protein] + ADP + H(+). Its function is as follows. May regulate bacterial growth in response to external signals to facilitate adaptation to the host environment. The sequence is that of Serine/threonine-protein kinase PknH (pknH) from Mycobacterium tuberculosis (strain CDC 1551 / Oshkosh).